We begin with the raw amino-acid sequence, 208 residues long: Small ribosomal subunit protein uS4 (208 aa).

Residues 98–159 form the S4 RNA-binding domain; the sequence is RRLDNVAYRL…KSRKVAAISE (62 aa).

This sequence belongs to the universal ribosomal protein uS4 family. As to quaternary structure, part of the 30S ribosomal subunit. Contacts protein S5. The interaction surface between S4 and S5 is involved in control of translational fidelity.

One of the primary rRNA binding proteins, it binds directly to 16S rRNA where it nucleates assembly of the body of the 30S subunit. In terms of biological role, with S5 and S12 plays an important role in translational accuracy. This Citrifermentans bemidjiense (strain ATCC BAA-1014 / DSM 16622 / JCM 12645 / Bem) (Geobacter bemidjiensis) protein is Small ribosomal subunit protein uS4.